The following is a 44-amino-acid chain: Cuticle protein CP466 (44 aa).

A run of 2 repeats spans residues 3-20 and 27-44.

In terms of tissue distribution, calcified shell.

This chain is Cuticle protein CP466, found in Cancer pagurus (Rock crab).